The sequence spans 144 residues: Small ribosomal subunit protein uS19 (144 aa).

This sequence belongs to the universal ribosomal protein uS19 family.

In terms of biological role, protein S19 forms a complex with S13 that binds strongly to the 16S ribosomal RNA. This Aeropyrum pernix (strain ATCC 700893 / DSM 11879 / JCM 9820 / NBRC 100138 / K1) protein is Small ribosomal subunit protein uS19 (rps19).